Reading from the N-terminus, the 375-residue chain is Growth/differentiation factor 8 (375 aa).

Positions 1–18 (MQKLQISVYIYLFMLIVA) are cleaved as a signal peptide. Residues 19 to 266 (GPVDLNEKSE…VTDTPKRSRR (248 aa)) constitute a propeptide that is removed on maturation. Asn-47 and Asn-71 each carry an N-linked (GlcNAc...) asparagine glycan. Disulfide bonds link Cys-272–Cys-282, Cys-281–Cys-340, Cys-309–Cys-372, and Cys-313–Cys-374.

This sequence belongs to the TGF-beta family. In terms of assembly, homodimer; disulfide-linked. Interacts with WFIKKN2, leading to inhibit its activity. Interacts with FSTL3. Post-translationally, synthesized as large precursor molecule that undergoes proteolytic cleavage to generate an N-terminal propeptide and a disulfide linked C-terminal dimer, which is the biologically active molecule. The circulating form consists of a latent complex of the C-terminal dimer and other proteins, including its propeptide, which maintain the C-terminal dimer in a latent, inactive state. Ligand activation requires additional cleavage of the prodomain by a tolloid-like metalloproteinase.

It is found in the secreted. Acts specifically as a negative regulator of skeletal muscle growth. This chain is Growth/differentiation factor 8 (MSTN), found in Taurotragus derbianus (Giant eland).